The primary structure comprises 268 residues: MATVPELTSEMMAYHSGNENDLFFEADGPNYMKSCFQDLDLCCPDEGIQLRISCQPYNKSFRQVLSVVVALEKLRQKAVPCPQAFQDDGLRTFFSLIFEEEPVLCNTWDDYSLECDAVRSLHCRLQDAQQKSLVLSGTYELKALHLNAENLNQQVVFSMSFVQGEESNDKIPVALGLRGKNLYLSCVMKDDKPTLQLESVDPNRYPKKKMEKRFVFNKIEIKDKLEFESAQFPNWYISTSQTEYMPVFLGNNSGGQDLIDFSMEFVSS.

Positions 1–116 (MATVPELTSE…TWDDYSLECD (116 aa)) are excised as a propeptide.

The protein belongs to the IL-1 family. In terms of assembly, monomer. In its precursor form, weakly interacts with full-length MEFV; the mature cytokine does not interact at all. Interacts with integrins ITGAV:ITGBV and ITGA5:ITGB1; integrin-binding is required for IL1B signaling. Interacts with cargo receptor TMED10; the interaction is direct and is required for the secretion of IL1B mature form. Interacts with HSP90AB1; the interaction facilitates cargo translocation into the ERGIC. Interacts with HSP90B1; the interaction facilitates cargo translocation into the ERGIC.

It is found in the cytoplasm. The protein resides in the cytosol. Its subcellular location is the secreted. It localises to the lysosome. The protein localises to the extracellular exosome. Functionally, potent pro-inflammatory cytokine. Initially discovered as the major endogenous pyrogen, induces prostaglandin synthesis, neutrophil influx and activation, T-cell activation and cytokine production, B-cell activation and antibody production, and fibroblast proliferation and collagen production. Promotes Th17 differentiation of T-cells. Synergizes with IL12/interleukin-12 to induce IFNG synthesis from T-helper 1 (Th1) cells. Plays a role in angiogenesis by inducing VEGF production synergistically with TNF and IL6. Involved in transduction of inflammation downstream of pyroptosis: its mature form is specifically released in the extracellular milieu by passing through the gasdermin-D (GSDMD) pore. The sequence is that of Interleukin-1 beta (IL1B) from Oryctolagus cuniculus (Rabbit).